The primary structure comprises 201 residues: GTP cyclohydrolase 1 (201 aa).

Residues cysteine 90, histidine 93, and cysteine 163 each coordinate Zn(2+).

Belongs to the GTP cyclohydrolase I family. In terms of assembly, toroid-shaped homodecamer, composed of two pentamers of five dimers.

The enzyme catalyses GTP + H2O = 7,8-dihydroneopterin 3'-triphosphate + formate + H(+). Its pathway is cofactor biosynthesis; 7,8-dihydroneopterin triphosphate biosynthesis; 7,8-dihydroneopterin triphosphate from GTP: step 1/1. The sequence is that of GTP cyclohydrolase 1 (folE) from Streptomyces coelicolor (strain ATCC BAA-471 / A3(2) / M145).